The sequence spans 680 residues: MEDYIILSKCGQGTYGSVFKGIHKITHSLVALKRVTDIAQEDGEPVEVKYLNQLKNLSNIVNLRDHFYIDKNSVLVLIMEFIEGDLWKIMSNPQCTLSLGQIKNFTKQLLEGVKQCHVNGIMHRDIKPANLLITTNGVLKLTDFGLSTSYSKRSEKFLSSNVVSLYYRPPELLLGSCIYGPEIDMWSVGCILMEMINNSYLFAGADETAQLDLIFKLFGCPTEKSWPGVSSLPGYNDLFNKQQQQQQNENNYSKQHNNNNNNNNNNNNNNNNNNNNNNNNNNNNNNKYNNISTSCLQSPSSSPPIGGYASSLSSDFNSNEYNGYNQTFSNEDCLAISQKKLIDKFPHLVLLPSVLDLASKMLTLDPKKRINSLEALEHPWFKSSNDMDQIVPFSKDFTDLANRYIASTRQLQQQQHHHQQQQQQQQQQQQQQQPHQQQLIQRQHQEQQQQQLIQRQQEQSKQQLIQHHQQSVNQQQLAQQQQLAQHQQYNSQQHQQHHQQQHQQHQQHQQQQQQQQQQQQQQQQQQQQQQQQQQQQQQQYHQHQQQYHQYQQQYHQPSQQQQQQQQQQQQQQQQQQQQQQQQQQQQQQQQQQQQQQQQQQHQYQPPQQYNHQPPQHQHQHQHQHQHQHQHQHQPQPQHQHQPQPQPQPTPTPTPTSTPTTTTIPPTITTTIQPTISKSNG.

The 378-residue stretch at 4–381 (YIILSKCGQG…SLEALEHPWF (378 aa)) folds into the Protein kinase domain. Residues 10–18 (CGQGTYGSV) and K33 contribute to the ATP site. Residue D125 is the Proton acceptor of the active site. Disordered stretches follow at residues 243–299 (QQQQ…LQSP), 409–444 (RQLQ…QRQH), 483–507 (LAQH…QHQQ), and 597–680 (QQQQ…KSNG). A compositionally biased stretch (low complexity) spans 257–286 (NNNNNNNNNNNNNNNNNNNNNNNNNNNNNN). Residues 287-297 (KYNNISTSCLQ) are compositionally biased toward polar residues. Low complexity-rich tracts occupy residues 410 to 444 (QLQQ…QRQH), 483 to 494 (LAQHQQYNSQQH), and 597 to 616 (QQQQ…PPQH). The span at 617–631 (QHQHQHQHQHQHQHQ) shows a compositional bias: basic residues. The span at 632-642 (HQPQPQHQHQP) shows a compositional bias: low complexity. A compositionally biased stretch (pro residues) spans 643 to 655 (QPQPQPTPTPTPT). A compositionally biased stretch (low complexity) spans 656–680 (STPTTTTIPPTITTTIQPTISKSNG).

Belongs to the protein kinase superfamily. CMGC Ser/Thr protein kinase family. CDC2/CDKX subfamily.

The enzyme catalyses L-seryl-[protein] + ATP = O-phospho-L-seryl-[protein] + ADP + H(+). It catalyses the reaction L-threonyl-[protein] + ATP = O-phospho-L-threonyl-[protein] + ADP + H(+). The sequence is that of Putative cyclin-dependent serine/threonine-protein kinase DDB_G0272797/DDB_G0274007 from Dictyostelium discoideum (Social amoeba).